A 404-amino-acid chain; its full sequence is CCA-adding enzyme (404 aa).

Gly27 and Arg30 together coordinate ATP. 2 residues coordinate CTP: Gly27 and Arg30. The Mg(2+) site is built by Asp40 and Asp42. Residues Arg111, Asp154, Arg157, Arg160, and Arg163 each contribute to the ATP site. Arg111, Asp154, Arg157, Arg160, and Arg163 together coordinate CTP.

Belongs to the tRNA nucleotidyltransferase/poly(A) polymerase family. Bacterial CCA-adding enzyme type 3 subfamily. In terms of assembly, homodimer. Requires Mg(2+) as cofactor.

The enzyme catalyses a tRNA precursor + 2 CTP + ATP = a tRNA with a 3' CCA end + 3 diphosphate. It carries out the reaction a tRNA with a 3' CCA end + 2 CTP + ATP = a tRNA with a 3' CCACCA end + 3 diphosphate. In terms of biological role, catalyzes the addition and repair of the essential 3'-terminal CCA sequence in tRNAs without using a nucleic acid template. Adds these three nucleotides in the order of C, C, and A to the tRNA nucleotide-73, using CTP and ATP as substrates and producing inorganic pyrophosphate. tRNA 3'-terminal CCA addition is required both for tRNA processing and repair. Also involved in tRNA surveillance by mediating tandem CCA addition to generate a CCACCA at the 3' terminus of unstable tRNAs. While stable tRNAs receive only 3'-terminal CCA, unstable tRNAs are marked with CCACCA and rapidly degraded. The protein is CCA-adding enzyme of Geobacillus sp. (strain WCH70).